Reading from the N-terminus, the 292-residue chain is Sulfofructosephosphate aldolase (292 aa).

Residue lysine 193 is the Schiff-base intermediate with substrate of the active site.

Belongs to the aldolase LacD family. Homotetramer.

The catalysed reaction is 6-deoxy-6-sulfo-D-fructose 1-phosphate = (2S)-3-sulfolactaldehyde + dihydroxyacetone phosphate. Functionally, cleaves 6-deoxy-6-sulfo-D-fructose 1-phosphate (SFP) to form dihydroxyacetone phosphate (DHAP) and 3-sulfolactaldehyde (SLA). This Escherichia coli O157:H7 protein is Sulfofructosephosphate aldolase (yihT).